A 54-amino-acid chain; its full sequence is Large ribosomal subunit protein bL33A (54 aa).

This sequence belongs to the bacterial ribosomal protein bL33 family.

This Mycolicibacterium gilvum (strain PYR-GCK) (Mycobacterium gilvum (strain PYR-GCK)) protein is Large ribosomal subunit protein bL33A.